The following is a 271-amino-acid chain: Sulfur carrier protein FdhD (271 aa).

Residue C114 is the Cysteine persulfide intermediate of the active site.

This sequence belongs to the FdhD family.

It localises to the cytoplasm. In terms of biological role, required for formate dehydrogenase (FDH) activity. Acts as a sulfur carrier protein that transfers sulfur from IscS to the molybdenum cofactor prior to its insertion into FDH. This is Sulfur carrier protein FdhD from Agrobacterium fabrum (strain C58 / ATCC 33970) (Agrobacterium tumefaciens (strain C58)).